A 101-amino-acid chain; its full sequence is NADH-quinone oxidoreductase subunit K (101 aa).

The next 3 membrane-spanning stretches (helical) occupy residues 4 to 24, 29 to 49, and 61 to 81; these read LAHY…GIFL, IIII…NFVA, and IFVF…LAIL.

This sequence belongs to the complex I subunit 4L family. NDH-1 is composed of 14 different subunits. Subunits NuoA, H, J, K, L, M, N constitute the membrane sector of the complex.

The protein resides in the cell inner membrane. The catalysed reaction is a quinone + NADH + 5 H(+)(in) = a quinol + NAD(+) + 4 H(+)(out). NDH-1 shuttles electrons from NADH, via FMN and iron-sulfur (Fe-S) centers, to quinones in the respiratory chain. The immediate electron acceptor for the enzyme in this species is believed to be ubiquinone. Couples the redox reaction to proton translocation (for every two electrons transferred, four hydrogen ions are translocated across the cytoplasmic membrane), and thus conserves the redox energy in a proton gradient. The sequence is that of NADH-quinone oxidoreductase subunit K from Burkholderia vietnamiensis (strain G4 / LMG 22486) (Burkholderia cepacia (strain R1808)).